Consider the following 512-residue polypeptide: ATP synthase subunit alpha (512 aa).

An ATP-binding site is contributed by 169-176 (GDRQTGKT).

This sequence belongs to the ATPase alpha/beta chains family. In terms of assembly, F-type ATPases have 2 components, CF(1) - the catalytic core - and CF(0) - the membrane proton channel. CF(1) has five subunits: alpha(3), beta(3), gamma(1), delta(1), epsilon(1). CF(0) has three main subunits: a(1), b(2) and c(9-12). The alpha and beta chains form an alternating ring which encloses part of the gamma chain. CF(1) is attached to CF(0) by a central stalk formed by the gamma and epsilon chains, while a peripheral stalk is formed by the delta and b chains.

The protein localises to the cell inner membrane. The catalysed reaction is ATP + H2O + 4 H(+)(in) = ADP + phosphate + 5 H(+)(out). Its function is as follows. Produces ATP from ADP in the presence of a proton gradient across the membrane. The alpha chain is a regulatory subunit. The chain is ATP synthase subunit alpha from Rickettsia canadensis (strain McKiel).